The chain runs to 347 residues: Ion-translocating oxidoreductase complex subunit D (347 aa).

4 consecutive transmembrane segments (helical) span residues 15–35 (IMFLVIVACLPGIFAKYYFFG), 36–56 (IGTLIQIFFSIFISLVLEIII), 84–104 (IPPLLPWWMTSIGLFFAIVVA), and 114–134 (NIFNPAMVGYAVLLISFPVYM). The residue at position 182 (Thr-182) is an FMN phosphoryl threonine. The next 5 helical transmembrane spans lie at 217–237 (CINISFFLGGIFLLFTKIICW), 239–259 (IPISFLSSLGMLSIITYFYSK), 261–281 (LFMSPQVHFFSGGTMICAFFI), 289–309 (ACNNVGKIVFGIIIGFLVWII), and 315–335 (YPDAIAFSVLFANMTVPLVDY).

Belongs to the NqrB/RnfD family. In terms of assembly, the complex is composed of six subunits: RnfA, RnfB, RnfC, RnfD, RnfE and RnfG. The cofactor is FMN.

It is found in the cell inner membrane. Its function is as follows. Part of a membrane-bound complex that couples electron transfer with translocation of ions across the membrane. This Buchnera aphidicola subsp. Acyrthosiphon pisum (strain 5A) protein is Ion-translocating oxidoreductase complex subunit D.